We begin with the raw amino-acid sequence, 138 residues long: Large ribosomal subunit protein uL16 (138 aa).

Belongs to the universal ribosomal protein uL16 family. Part of the 50S ribosomal subunit.

In terms of biological role, binds 23S rRNA and is also seen to make contacts with the A and possibly P site tRNAs. The protein is Large ribosomal subunit protein uL16 of Chlamydia caviae (strain ATCC VR-813 / DSM 19441 / 03DC25 / GPIC) (Chlamydophila caviae).